The chain runs to 386 residues: uncharacterized protein (386 aa).

12 consecutive transmembrane segments (helical) span residues 8–28, 43–63, 79–99, 102–122, 134–154, 156–176, 216–236, 241–261, 272–292, 297–317, 342–362, and 365–385; these read VFVIWITTFTTMLGVGFIAPI, IGLIFGSFALARTVAQIPVGV, FFYGVSTLMYNFVSTVLGFLI, IFTGIFSAFVTPVAGSYIAAI, IFNSAITLGFGIGPFIGGILA, MYGIKMPFYFCGFLGILAAII, FIINVSNVMINAGIYAYLALY, NITISQVGFMIALTNILMALL, LGNIMIIIGIFIISFGMYLLS, FLTILASLTIIAVGSSISSTA, INIGMFIGAVSFGFLADILGI, and MYKFSAIFSIVVGIISYLRIE.

It belongs to the major facilitator superfamily.

It localises to the cell membrane. This is an uncharacterized protein from Methanocaldococcus jannaschii (strain ATCC 43067 / DSM 2661 / JAL-1 / JCM 10045 / NBRC 100440) (Methanococcus jannaschii).